The chain runs to 576 residues: S-layer protein (576 aa).

An N-terminal signal peptide occupies residues 1 to 23 (KKIGAIAAGSAMVASALATGVFA). Residues N102 and N132 are each glycosylated (N-linked (GlcNAc...) asparagine).

Belongs to the Mj S-layer protein family. In terms of processing, N-linked glycans consist of the 779 Da trisaccharide beta-ManNAc(Thr)-(1-4)-beta-GlcNAc3NAcA-(1-3)-beta-GlcNAc.

The protein localises to the secreted. Its subcellular location is the cell wall. The protein resides in the S-layer. S-layer protein. The S-layer is a paracrystalline mono-layered assembly of proteins which coat the surface of the cell. This is S-layer protein (sla) from Methanococcus voltae.